The primary structure comprises 327 residues: uncharacterized protein (327 aa).

The 74-residue stretch at 32 to 105 folds into the S4 RNA-binding domain; sequence VRLDKWLAEQ…IPLDILYEDE (74 aa). Residue D156 is part of the active site.

The protein belongs to the pseudouridine synthase RluA family.

It catalyses the reaction a uridine in RNA = a pseudouridine in RNA. This is an uncharacterized protein from Synechocystis sp. (strain ATCC 27184 / PCC 6803 / Kazusa).